We begin with the raw amino-acid sequence, 337 residues long: GTPase Obg (337 aa).

Residues 1–159 (MQFIDYVKIY…RWVILELKLL (159 aa)) form the Obg domain. One can recognise an OBG-type G domain in the interval 160–331 (ADVGLIGLPN…LLHYLSEKVG (172 aa)). GTP contacts are provided by residues 166–173 (GLPNAGKS), 191–195 (FTTLI), 213–216 (DIPG), 283–286 (TKID), and 312–314 (SAV). Ser-173 and Thr-193 together coordinate Mg(2+).

This sequence belongs to the TRAFAC class OBG-HflX-like GTPase superfamily. OBG GTPase family. As to quaternary structure, monomer. The cofactor is Mg(2+).

The protein resides in the cytoplasm. An essential GTPase which binds GTP, GDP and possibly (p)ppGpp with moderate affinity, with high nucleotide exchange rates and a fairly low GTP hydrolysis rate. Plays a role in control of the cell cycle, stress response, ribosome biogenesis and in those bacteria that undergo differentiation, in morphogenesis control. This is GTPase Obg from Thermodesulfovibrio yellowstonii (strain ATCC 51303 / DSM 11347 / YP87).